The following is a 480-amino-acid chain: Ochratoxinase (480 aa).

Residues histidine 111, histidine 113, lysine 246, histidine 287, and histidine 307 each coordinate Zn(2+). The active site involves lysine 246. Aspartate 378 is an active-site residue.

The protein belongs to the metallo-dependent hydrolases superfamily. Ochratoxinase amidase 2 family. Homooctamer. It depends on Zn(2+) as a cofactor.

It localises to the secreted. The enzyme catalyses ochratoxin A + H2O = ochratoxin alpha + L-phenylalanine. With respect to regulation, the Zn(2+)-specific chelator 1,10-phenanthroline inhibits the enzyme activity. Functionally, carboxypeptidase that catalyzes the release of a C-terminal amino acid with specific catalytic activity for aromatic amino acids such as phenylalanine. Is able to degrade ochratoxin A, one of the five major mycotoxins most harmful to humans and animals that is produced by Aspergillus and Penicillium species and occurs in a wide range of agricultural products. The polypeptide is Ochratoxinase (Aspergillus niger (strain ATCC 1015 / CBS 113.46 / FGSC A1144 / LSHB Ac4 / NCTC 3858a / NRRL 328 / USDA 3528.7)).